The following is a 362-amino-acid chain: MFKKHTISLLIIFLLASAVLAKPIEAHTVSPVNPNAQQTTKTVMNWLAHLPNRTENRVLSGAFGGYSHDTFSMAEADRIRSATGQSPAIYGCDYARGWLETANIEDSIDVSCNGDLMSYWKNGGIPQISLHLANPAFQSGHFKTPITNDQYKKILDSSTVEGKRLNAMLSKIADGLQELENQGVPVLFRPLHEMNGEWFWWGLTSYNQKDNERISLYKQLYKKIYHYMTDTRGLDHLIWVYSPDANRDFKTDFYPGASYVDIVGLDAYFQDAYSINGYDQLTALNKPFAFTEVGPQTANGSFDYSLFINAIKQKYPKTIYFLAWNDEWSAAVNKGASALYHDSWTLNKGEIWNGDSLTPIVE.

The signal sequence occupies residues 1-26; that stretch reads MFKKHTISLLIIFLLASAVLAKPIEA. The region spanning 38-349 is the GH26 domain; it reads QTTKTVMNWL…YHDSWTLNKG (312 aa). His-131 serves as a coordination point for substrate. The Proton donor role is filled by Glu-193. Trp-198 and Tyr-268 together coordinate substrate. Glu-292 (nucleophile) is an active-site residue. Substrate is bound at residue 324–325; that stretch reads WN.

The protein belongs to the glycosyl hydrolase 26 family. Homodimer.

It is found in the secreted. It carries out the reaction Random hydrolysis of (1-&gt;4)-beta-D-mannosidic linkages in mannans, galactomannans and glucomannans.. Functionally, involved in the degradation of glucomannan. Catalyzes the endo hydrolysis of beta-1,4-linked mannan, galactomannan and glucomannan. The protein is Mannan endo-1,4-beta-mannosidase of Bacillus subtilis (strain 168).